A 344-amino-acid chain; its full sequence is Proline-rich transmembrane protein 2 (344 aa).

Disordered regions lie at residues 1-220 and 233-265; these read MAAS…GAPP and GRAH…GGEG. At 1 to 272 the chain is on the cytoplasmic side; it reads MAASSSEVSE…GEGTQKPRDY (272 aa). At serine 28 the chain carries Phosphoserine. Positions 69 to 82 are enriched in low complexity; the sequence is PETTETPVETPETV. Residues threonine 74 and threonine 78 each carry the phosphothreonine modification. A compositionally biased stretch (polar residues) spans 124 to 143; that stretch reads AEQQSAAPPEPTSEQALQLN. Pro residues predominate over residues 151–162; the sequence is TSQPPPKPPLQA. Positions 168–178 are enriched in polar residues; the sequence is ENPTTEVLTES. The span at 201–211 shows a compositional bias: pro residues; it reads APQPHSPPSTK. Serine 242 carries the post-translational modification Phosphoserine. Residue arginine 244 is modified to Omega-N-methylarginine. Residues serine 252 and serine 253 each carry the phosphoserine modification. An intramembrane region (helical) is located at residues 273–293; that stretch reads IILAILSCFCPMWPVNIVAFA. The Cytoplasmic portion of the chain corresponds to 294 to 321; it reads YAVMSRNSLQQGDVDGAQRLGRVAKLLS. Residues 322 to 342 traverse the membrane as a helical segment; the sequence is IVALVGGVLIIIASCVINLGV. The Extracellular segment spans residues 343–344; it reads YK.

Belongs to the CD225/Dispanin family. Component of the outer core of AMPAR complex. AMPAR complex consists of an inner core made of 4 pore-forming GluA/GRIA proteins (GRIA1, GRIA2, GRIA3 and GRIA4) and 4 major auxiliary subunits arranged in a twofold symmetry. One of the two pairs of distinct binding sites is occupied either by CNIH2, CNIH3 or CACNG2, CACNG3. The other harbors CACNG2, CACNG3, CACNG4, CACNG8 or GSG1L. This inner core of AMPAR complex is complemented by outer core constituents binding directly to the GluA/GRIA proteins at sites distinct from the interaction sites of the inner core constituents. Outer core constituents include at least PRRT1, PRRT2, CKAMP44/SHISA9, FRRS1L and NRN1. The proteins of the inner and outer core serve as a platform for other, more peripherally associated AMPAR constituents. Alone or in combination, these auxiliary subunits control the gating and pharmacology of the AMPAR complex and profoundly impact their biogenesis and protein processing. Interacts with intersectin 1/ITSN1. Interacts with SNARE complex components, including SNAP25, STX1A, SYT1 and SYT2; this interaction may inhibit SNARE complex formation. As to expression, neuron-specific expression throughout the brain, including hippocampus (at protein level).

The protein resides in the cell membrane. It localises to the presynaptic cell membrane. The protein localises to the synapse. It is found in the cell projection. Its subcellular location is the axon. The protein resides in the cytoplasmic vesicle. It localises to the secretory vesicle. The protein localises to the synaptic vesicle membrane. It is found in the postsynaptic density membrane. Its subcellular location is the dendritic spine. Functionally, as a component of the outer core of AMPAR complex, may be involved in synaptic transmission in the central nervous system. In hippocampal neurons, in presynaptic terminals, plays an important role in the final steps of neurotransmitter release, possibly by regulating Ca(2+)-sensing. In the cerebellum, may inhibit SNARE complex formation and down-regulate short-term facilitation. The sequence is that of Proline-rich transmembrane protein 2 (Prrt2) from Rattus norvegicus (Rat).